Consider the following 469-residue polypeptide: Alpha,alpha-trehalose-phosphate synthase [UDP-forming] (469 aa).

Positions 87 and 141 each coordinate D-glucose 6-phosphate. Residues Arg279 and Lys284 each contribute to the UDP site. UDP-alpha-D-glucose is bound by residues Arg279 and Lys284. Arg317 contributes to the D-glucose 6-phosphate binding site. Position 378 to 386 (Asp378 to Glu386) interacts with UDP-alpha-D-glucose. Leu382–Glu386 is a binding site for UDP.

The protein belongs to the glycosyltransferase 20 family.

The catalysed reaction is D-glucose 6-phosphate + UDP-alpha-D-glucose = alpha,alpha-trehalose 6-phosphate + UDP + H(+). It functions in the pathway carbohydrate biosynthesis. In terms of biological role, synthase catalytic subunit of the trehalose synthase complex that catalyzes the production of trehalose from glucose-6-phosphate and UDP-alpha-D-glucose in a two step process. The disaccharide trehalose serves as a storage carbohydrate that is mobilized during spore germination. In Yarrowia lipolytica (strain CLIB 122 / E 150) (Yeast), this protein is Alpha,alpha-trehalose-phosphate synthase [UDP-forming].